Here is a 254-residue protein sequence, read N- to C-terminus: Imidazole glycerol phosphate synthase subunit HisF (254 aa).

Active-site residues include D11 and D130.

This sequence belongs to the HisA/HisF family. Heterodimer of HisH and HisF.

The protein resides in the cytoplasm. It carries out the reaction 5-[(5-phospho-1-deoxy-D-ribulos-1-ylimino)methylamino]-1-(5-phospho-beta-D-ribosyl)imidazole-4-carboxamide + L-glutamine = D-erythro-1-(imidazol-4-yl)glycerol 3-phosphate + 5-amino-1-(5-phospho-beta-D-ribosyl)imidazole-4-carboxamide + L-glutamate + H(+). Its pathway is amino-acid biosynthesis; L-histidine biosynthesis; L-histidine from 5-phospho-alpha-D-ribose 1-diphosphate: step 5/9. IGPS catalyzes the conversion of PRFAR and glutamine to IGP, AICAR and glutamate. The HisF subunit catalyzes the cyclization activity that produces IGP and AICAR from PRFAR using the ammonia provided by the HisH subunit. The chain is Imidazole glycerol phosphate synthase subunit HisF from Laribacter hongkongensis (strain HLHK9).